A 155-amino-acid polypeptide reads, in one-letter code: Small ribosomal subunit protein uS9 (155 aa).

The protein belongs to the universal ribosomal protein uS9 family.

The protein is Small ribosomal subunit protein uS9 of Rhizobium etli (strain CIAT 652).